The chain runs to 908 residues: Oxysterol-binding protein 2 (908 aa).

The disordered stretch occupies residues 42–112 (SAFGSGPASK…GLWPGSENGT (71 aa)). Residues 81–90 (EPGSQTTSVP) are compositionally biased toward polar residues. A PH domain is found at 179 to 271 (LDSYKGWLLK…WITALELAKA (93 aa)). 3 disordered regions span residues 279-299 (TQSDDSGDDDEEPAAPADNSE), 413-445 (RAFCNTPGGPASSSKSFSEGSFLTSKGENSEED), and 822-843 (LMERGRWDEANTEKQRLEEKQR). Serine 284 is subject to Phosphoserine. Over residues 424–437 (SSSKSFSEGSFLTS) the composition is skewed to low complexity.

The protein belongs to the OSBP family. In terms of assembly, interacts with CCDC159. In terms of tissue distribution, expressed in the testis (at protein level). Expressed in postmeiotic germ cells of the testis.

The protein resides in the membrane. It is found in the cytoplasmic vesicle. The protein localises to the secretory vesicle. It localises to the acrosome. Binds 7-ketocholesterol. Acts during spermatid development where its function is required prior to the removal of cytoplasm from the sperm head. The protein is Oxysterol-binding protein 2 (Osbp2) of Mus musculus (Mouse).